The primary structure comprises 337 residues: MTLQIGVIGCGAIGQDHIRRLTRTLSGARVVAVNDIDPQQARDAVTKYGLDAEIYGDGHEVVAAADVQAVLVTSWGPTHEAFVLDAIAHGKPVFCEKPLAVTAEGCMRIVEAEVAHGKRLVQVGFMRPYDEGYRALKRVIDSGQIGAPLMLHCAHRNQSVGERYTTDMAITDTLIHELDVLRWLLGEDYASAQVVYPKKTRHASAHLADPQIVLLETASGVRIDVEIFVNCQYGYDIQCEVVGEQGIAKLPDPPAVGLKHAARQSVEIMTDWKERFIASYDVELQAFIDGVRQGALTGPSAWDGYAAAVAADACVRAQQSGAVEPIAMAERPAFYRG.

It belongs to the Gfo/Idh/MocA family. Homotetramer.

It carries out the reaction myo-inositol + NAD(+) = scyllo-inosose + NADH + H(+). Functionally, involved in the oxidation of myo-inositol (MI) to 2-keto-myo-inositol (2KMI or 2-inosose). This is Inositol 2-dehydrogenase from Burkholderia cenocepacia (strain HI2424).